The sequence spans 445 residues: Argininosuccinate lyase (445 aa).

This sequence belongs to the lyase 1 family. Argininosuccinate lyase subfamily.

The protein resides in the cytoplasm. The catalysed reaction is 2-(N(omega)-L-arginino)succinate = fumarate + L-arginine. Its pathway is amino-acid biosynthesis; L-arginine biosynthesis; L-arginine from L-ornithine and carbamoyl phosphate: step 3/3. This is Argininosuccinate lyase from Xylella fastidiosa (strain Temecula1 / ATCC 700964).